A 790-amino-acid chain; its full sequence is MCSTYGLLSFEFSDTAAMDPIFFSPTNGIPSESKLATYMNRQNVATPSGYGLNNGFSLLNLDSPLNKKSQVTPQSPEFIPTRLGSTPNFYAPYHNAPMQLSNGLNGVNGLTAAAAAAAAAAAAAAAAVPSSTSSASSASVTISKTANGGASMLALQKTASIASVTIAQQQPQHPQKQQQHPPSVGGGAVSAASAPIAISGAPPNPAAAPFVSSMSAQTPLKGRGAMMRQESPTAAMISGAGPGEKSPPHGMTPHGASPIPSALPTSVHQENVGGTIYFYPTANAQNSQPVVNSMVVDGTHPALHGVSAVAPMSAGVPAAMMYTGHVYPGPSSNVVTMQPKTLLESAFFMPDEMRAEVLARNEISNLIMDAAEAAQHALPLEVENYHALYPLEPPAQPLHAKLTFPATTYRATHNTTGYKYCLRRIHGFRLQSTKCMTLVEMWKKLQHTNVVQLREVFTTKAFGDNSLVLVYDYHPGSQTLLAKYFTPAPETNGYTDPFQGEARPFSHKSNMQRTSNGPLLPEATIWSIIMQLTAGLKAIHHAGLACKVLDPTKIIVTGKRVRFSSCCISDITQFDPNASNPLALVNMHQQDDLTALGRLVLALACRCLQSVQRDNVQSSIDMVTRNYSTDLRNFIVYLFTTNNRRSVTDLMPMIGARFYTQLDALQSKIDMQEDELAKEMENGRLYRILVKLNSINERPDFNLDCTWSETGDRYMLKLFRDYLFHSVTEDGRPWLDHAHIVQCLNKLDAGSIERVQLMSRDEQSVLIVSYAELKNCLENAFSELMSSAAN.

2 disordered regions span residues 166-191 (IAQQ…AVSA) and 235-259 (AMIS…ASPI). The segment covering 168 to 191 (QQQPQHPQKQQQHPPSVGGGAVSA) has biased composition (low complexity). Positions 369–655 (DAAEAAQHAL…SVTDLMPMIG (287 aa)) are pseudokinase domain. ATP is bound by residues Arg423, 472 to 479 (DYHPGSQT), and 552 to 553 (TK). Positions 656-694 (ARFYTQLDALQSKIDMQEDELAKEMENGRLYRILVKLNS) form a coiled coil. The tract at residues 695–790 (INERPDFNLD…FSELMSSAAN (96 aa)) is knob domain.

The protein belongs to the protein kinase superfamily. PAN3 family. In terms of assembly, homodimer. Forms a heterotrimer with a catalytic subunit PAN2 to form the poly(A)-nuclease (PAN) deadenylation complex. Interacts (via PAM-2 motif) with poly(A)-binding protein (via PABC domain), conferring substrate specificity of the enzyme complex. Interacts with the GW182 family protein gw. Interacts with Gyf.

It is found in the cytoplasm. The protein localises to the P-body. Regulatory subunit of the poly(A)-nuclease (PAN) deadenylation complex, one of two cytoplasmic mRNA deadenylases involved in general and miRNA-mediated mRNA turnover. PAN specifically shortens poly(A) tails of RNA and the activity is stimulated by poly(A)-binding protein (PABP). PAN deadenylation is followed by rapid degradation of the shortened mRNA tails by the CCR4-NOT complex. Deadenylated mRNAs are then degraded by two alternative mechanisms, namely exosome-mediated 3'-5' exonucleolytic degradation, or deadenylation-dependent mRNA decaping and subsequent 5'-3' exonucleolytic degradation by XRN1. PAN3 acts as a positive regulator for PAN activity, recruiting the catalytic subunit PAN2 to mRNA via its interaction with RNA and PABP, and to miRNA targets via its interaction with GW182 family proteins. This is PAN2-PAN3 deadenylation complex subunit PAN3 from Drosophila melanogaster (Fruit fly).